Reading from the N-terminus, the 210-residue chain is Orotate phosphoribosyltransferase (210 aa).

5-phospho-alpha-D-ribose 1-diphosphate-binding positions include Arg-96, Lys-100, His-102, and 122–130 (EDLISTGGS). Ser-126 contacts orotate.

The protein belongs to the purine/pyrimidine phosphoribosyltransferase family. PyrE subfamily. In terms of assembly, homodimer. The cofactor is Mg(2+).

It catalyses the reaction orotidine 5'-phosphate + diphosphate = orotate + 5-phospho-alpha-D-ribose 1-diphosphate. Its pathway is pyrimidine metabolism; UMP biosynthesis via de novo pathway; UMP from orotate: step 1/2. In terms of biological role, catalyzes the transfer of a ribosyl phosphate group from 5-phosphoribose 1-diphosphate to orotate, leading to the formation of orotidine monophosphate (OMP). The polypeptide is Orotate phosphoribosyltransferase (Streptococcus pneumoniae serotype 4 (strain ATCC BAA-334 / TIGR4)).